A 351-amino-acid chain; its full sequence is DNA polymerase IV (351 aa).

In terms of domain architecture, UmuC spans 4 to 185; sequence IIHVDMDCFF…LPLAKIPGVG (182 aa). Positions 8 and 103 each coordinate Mg(2+). The active site involves glutamate 104.

It belongs to the DNA polymerase type-Y family. Monomer. It depends on Mg(2+) as a cofactor.

The protein resides in the cytoplasm. It carries out the reaction DNA(n) + a 2'-deoxyribonucleoside 5'-triphosphate = DNA(n+1) + diphosphate. Functionally, poorly processive, error-prone DNA polymerase involved in untargeted mutagenesis. Copies undamaged DNA at stalled replication forks, which arise in vivo from mismatched or misaligned primer ends. These misaligned primers can be extended by PolIV. Exhibits no 3'-5' exonuclease (proofreading) activity. May be involved in translesional synthesis, in conjunction with the beta clamp from PolIII. The chain is DNA polymerase IV from Salmonella arizonae (strain ATCC BAA-731 / CDC346-86 / RSK2980).